Reading from the N-terminus, the 376-residue chain is Non-structural protein NS2 (376 aa).

Positions 163 to 188 (EEREKGAVEQPHKPAFKTERGMNRPD) are enriched in basic and acidic residues. Residues 163–201 (EEREKGAVEQPHKPAFKTERGMNRPDSDEDQNPAGGVVN) are disordered.

Belongs to the orbivirus non-structural protein NS2 family.

Functionally, single-stranded RNA-binding protein. The polypeptide is Non-structural protein NS2 (Segment-8) (Antilocapra americana (Pronghorn)).